A 138-amino-acid chain; its full sequence is Isochorismatase-like protein asqB (138 aa).

The protein belongs to the isochorismatase family.

It catalyses the reaction [(1'E)-5'-(3',3'-dimethyloxiran-2'-yl)-3'-hydroxy-3'-methylpent-1'-en-1'-yl]-quinolinone B = yaequinolone C. It functions in the pathway secondary metabolite biosynthesis. It participates in alkaloid biosynthesis. Its pathway is mycotoxin biosynthesis. In terms of biological role, isochorismatase-like protein; part of the gene cluster that mediates the biosynthesis of the aspoquinolone mycotoxins. Within the pathway, asqB converts [(1'E)-5'-(3',3'-dimethyloxiran-2'-yl)-3'-hydroxy-3'-methylpent-1'-en-1'-yl]-quinolinone B into yaequinolone C. The first step of the pathway is catalyzed by the nonribosomal peptide synthetase asqK that condenses anthranilic acid and O-methyl-L-tyrosine to produce 4'-methoxycyclopeptin. 4'-methoxycyclopeptin is then converted to 4'-methoxydehydrocyclopeptin by the ketoglutarate-dependent dioxygenase asqJ. AsqJ also converts its first product 4'-methoxydehydrocyclopeptin to 4'-methoxycyclopenin. The following conversion of 4'-methoxycyclopenin into 4'-methoxyviridicatin is catalyzed by the cyclopenase asqI. 4'-methoxyviridicatin is the precursor of quinolone natural products, and is further converted to quinolinone B. The prenyltransferase asqH1 then catalyzes the canonical Friedel-Crafts alkylation of quinolinone B with dimethylallyl cation to yield dimethylallyl quinolone, which is subjected to FAD-dependent dehydrogenation by the FAD-linked oxidoreductase asqF to yield conjugated aryl diene. The delta(3') double bond then serves as the site of the second alkylation with DMAPP catalyzed by the prenyltransferase asqH2 to yield a carbenium ion intermediate, which can be attacked by H(2)O to yield a styrenyl quinolone containing a C3'-hydroxyprenyl chain. The FAD-dependent monooxygenase asqG performs epoxidation of the terminal C7'-C8' olefin. Finally, after dehydratation of the epoxide at C3 by asqC, the quinolone epoxide rearrangement protein asqO catalyzes an enzymatic 3-exo-tet cyclization to yield the cyclopropyl-THF ring system in aspoquinolone. In Emericella nidulans (strain FGSC A4 / ATCC 38163 / CBS 112.46 / NRRL 194 / M139) (Aspergillus nidulans), this protein is Isochorismatase-like protein asqB.